The following is a 180-amino-acid chain: ATP-dependent protease subunit HslV (180 aa).

The active site involves T5. Residues G165, C168, and T171 each contribute to the Na(+) site.

This sequence belongs to the peptidase T1B family. HslV subfamily. In terms of assembly, a double ring-shaped homohexamer of HslV is capped on each side by a ring-shaped HslU homohexamer. The assembly of the HslU/HslV complex is dependent on binding of ATP.

The protein localises to the cytoplasm. The enzyme catalyses ATP-dependent cleavage of peptide bonds with broad specificity.. Allosterically activated by HslU binding. Functionally, protease subunit of a proteasome-like degradation complex believed to be a general protein degrading machinery. In Helicobacter pylori (strain P12), this protein is ATP-dependent protease subunit HslV.